The chain runs to 532 residues: CTP synthase (532 aa).

The amidoligase domain stretch occupies residues 1-265 (MKYIVVTGGV…DEYLMRKLNL (265 aa)). Serine 12 serves as a coordination point for CTP. UTP is bound at residue serine 12. ATP is bound by residues 13-18 (GLGKGI) and aspartate 70. Mg(2+) contacts are provided by aspartate 70 and glutamate 140. Residues 147–149 (DIE), 186–191 (KTKPTQ), and lysine 222 each bind CTP. Residues 186–191 (KTKPTQ) and lysine 222 contribute to the UTP site. Positions 289-529 (SIAIVGKYVD…VRAALKYRRE (241 aa)) constitute a Glutamine amidotransferase type-1 domain. Position 349 (glycine 349) interacts with L-glutamine. The Nucleophile; for glutamine hydrolysis role is filled by cysteine 376. L-glutamine-binding positions include 377–380 (FGFQ), glutamate 400, and arginine 457. Active-site residues include histidine 502 and glutamate 504.

The protein belongs to the CTP synthase family. In terms of assembly, homotetramer.

It catalyses the reaction UTP + L-glutamine + ATP + H2O = CTP + L-glutamate + ADP + phosphate + 2 H(+). It carries out the reaction L-glutamine + H2O = L-glutamate + NH4(+). The enzyme catalyses UTP + NH4(+) + ATP = CTP + ADP + phosphate + 2 H(+). Its pathway is pyrimidine metabolism; CTP biosynthesis via de novo pathway; CTP from UDP: step 2/2. With respect to regulation, allosterically activated by GTP, when glutamine is the substrate; GTP has no effect on the reaction when ammonia is the substrate. The allosteric effector GTP functions by stabilizing the protein conformation that binds the tetrahedral intermediate(s) formed during glutamine hydrolysis. Inhibited by the product CTP, via allosteric rather than competitive inhibition. Functionally, catalyzes the ATP-dependent amination of UTP to CTP with either L-glutamine or ammonia as the source of nitrogen. Regulates intracellular CTP levels through interactions with the four ribonucleotide triphosphates. In Archaeoglobus fulgidus (strain ATCC 49558 / DSM 4304 / JCM 9628 / NBRC 100126 / VC-16), this protein is CTP synthase.